We begin with the raw amino-acid sequence, 1522 residues long: Sodium channel protein 1 brain (1522 aa).

Residues 1 to 50 (MDEKYTAKNRDKTFVVIEKRFKKNIIHRFSAKRSLFLFTPRNPIRRLAVC) are Cytoplasmic-facing. The I repeat unit spans residues 41 to 342 (RNPIRRLAVC…VATAYELEVK (302 aa)). Residues 51 to 70 (IATNVCFDYFLMFTIMINCV) traverse the membrane as a helical segment. The Extracellular segment spans residues 71-77 (FLAMPDI). A helical membrane pass occupies residues 78 to 99 (SEFAEYIFLGIYTMEMAIKLVA). Residues 100-112 (GGFFIDKYTYLRD) are Cytoplasmic-facing. The helical transmembrane segment at 113–134 (AWNCLDFTVIMISYITLLLQTI) threads the bilayer. Topologically, residues 135-143 (NDKVISDIT) are extracellular. The helical; Voltage-sensor transmembrane segment at 144–167 (GLRTFRVLRALRTLSIIPGLKTMV) threads the bilayer. The Cytoplasmic segment spans residues 168-179 (NALLRALRMLIS). A helical membrane pass occupies residues 180 to 201 (VLILILFCLWIFSQAGVQLFGG). Over 202-278 (ALRHKCVLQI…PNYGYTNFDS (77 aa)) the chain is Extracellular. A disulfide bridge connects residues C207 and C255. N-linked (GlcNAc...) asparagine glycosylation is found at N248 and N258. Positions 279–303 (IGWSMLISFQLLTQDYWEDVYNKVI) form an intramembrane region, pore-forming. Residues 304–308 (RAHSP) are Extracellular-facing. A helical membrane pass occupies residues 309 to 331 (WTVIYFIVINFFGSLYLMNLMLA). Residues 332 to 406 (VVATAYELEV…WLRVQSFAHC (75 aa)) lie on the Cytoplasmic side of the membrane. An II repeat occupies 393-647 (CYNPWLRVQS…EQEVEVSSFA (255 aa)). A helical transmembrane segment spans residues 407 to 426 (IITDSFTEVFIIFIIVLNTV). The Extracellular portion of the chain corresponds to 427–442 (FLAMEHHGMSMELKNV). The helical transmembrane segment at 443 to 464 (LKVANYVFTTVFVLEAILKLLA) threads the bilayer. The Cytoplasmic portion of the chain corresponds to 465 to 472 (FNKQYFKS). The chain crosses the membrane as a helical span at residues 473-491 (GWNICDLVVVVASLIDLGV). At 492–498 (EGLKGVS) the chain is on the extracellular side. A helical; Voltage-sensor membrane pass occupies residues 499-522 (VFRSFRLLRVFHLAQSWTTMRLLL). Over 523 to 531 (CIILNTLGS) the chain is Cytoplasmic. The chain crosses the membrane as a helical span at residues 532-553 (LGYLTIILIIVIYIFAVTGLQL). Over 554 to 575 (FHTEYTPDKFRGEPVPRWNFND) the chain is Extracellular. The segment at residues 576-596 (FLHSFMMVFRILCGEWIEPMY) is an intramembrane region (pore-forming). The Extracellular portion of the chain corresponds to 597-607 (DCMRACNGLCF). A disulfide bridge links C598 with C606. The helical transmembrane segment at 608 to 628 (LIFIPVTVFGKTLFFLFIGLV) threads the bilayer. At 629 to 777 (LGAFGSDTVE…WNNFRRQLMM (149 aa)) the chain is on the cytoplasmic side. Residues 770–1074 (NFRRQLMMVC…QNYYNTLKKL (305 aa)) form an III repeat. A helical transmembrane segment spans residues 778 to 797 (VCENKYFETGVLVIIFASSI). At 798–815 (LLAFEDIYLNEKPRLKLA) the chain is on the extracellular side. The helical transmembrane segment at 816–837 (IFYLDITFCLLFFLEMVLKLVA) threads the bilayer. The Cytoplasmic portion of the chain corresponds to 838 to 846 (LGFVHYYTH). Residues 847-868 (FWTILDFTIVIITVISLAASGL) form a helical membrane-spanning segment. The Extracellular portion of the chain corresponds to 869 to 874 (GMEQIT). The helical; Voltage-sensor transmembrane segment at 875 to 898 (AFRSLRTLRALRPLRAVSRWQGMK) threads the bilayer. The Cytoplasmic segment spans residues 899-915 (IIVNALMLSIPSIFNVL). Residues 916–937 (LVCVVFWLIFAIMGVQLFAGKF) traverse the membrane as a helical segment. The Extracellular portion of the chain corresponds to 938 to 976 (YKCVNETNMRIPPTEVANKIECYNKNYTWVNSNVNFDNV). 2 N-linked (GlcNAc...) asparagine glycosylation sites follow: N942 and N963. Residues 977–998 (GGAFLALFQVATFEGWMEIMAD) constitute an intramembrane region (pore-forming). The Extracellular segment spans residues 999 to 1009 (AVDVTEVDEQP). The helical transmembrane segment at 1010–1022 (KFEATVYYYFYFV) threads the bilayer. Topologically, residues 1023 to 1100 (LFIIFGSFFV…QAVVYDLVMS (78 aa)) are cytoplasmic. Residue T1076 is modified to Phosphothreonine; by PKC. One copy of the IV repeat lies at 1083 to 1386 (VKRPKNKCQA…WEQYDPLATQ (304 aa)). The chain crosses the membrane as a helical span at residues 1101-1120 (NQFEIFITTIIITNMIFMAF). The Extracellular portion of the chain corresponds to 1121-1132 (EHYNQSEVVTEV). N-linked (GlcNAc...) asparagine glycosylation occurs at N1124. The chain crosses the membrane as a helical span at residues 1133-1154 (LATANIAFTILYAVEAIIKIIG). Residues 1155 to 1162 (LRIHYLRN) lie on the Cytoplasmic side of the membrane. Residues 1163–1184 (LWNVFDFLVVTLSVMDAFLNDI) traverse the membrane as a helical segment. The Extracellular segment spans residues 1185–1194 (FGDGIFMNPS). Residues 1195 to 1218 (LLRVARMFRIGRIIRLIKWAKGMR) form a helical; Voltage-sensor membrane-spanning segment. The Cytoplasmic segment spans residues 1219–1236 (KLLFALVISLPALFNIGA). Residues 1237-1258 (LLMLVMFIYTIIGMSSFGQIKL) traverse the membrane as a helical segment. Residues 1259-1270 (SGALNDQVNFQT) are Extracellular-facing. Residues 1271-1293 (FGKTFLLLVRLATSAGWNDILGP) constitute an intramembrane region (pore-forming). At 1294–1323 (LLIQPPNCDPNYITTSTGEKIKVVNGDCGM) the chain is on the extracellular side. Residues 1324 to 1346 (PWLAISYMVSYIIIVFMIVFNMY) traverse the membrane as a helical segment. Residues 1347 to 1522 (IAVILENFNQ…FIISAPETAV (176 aa)) lie on the Cytoplasmic side of the membrane.

Belongs to the sodium channel (TC 1.A.1.10) family.

It localises to the cell membrane. In terms of biological role, mediates the voltage-dependent sodium ion permeability of excitable membranes. Assuming opened or closed conformations in response to the voltage difference across the membrane, the protein forms a sodium-selective channel through which Na(+) ions may pass in accordance with their electrochemical gradient. The protein is Sodium channel protein 1 brain of Heterololigo bleekeri (Spear squid).